Consider the following 625-residue polypeptide: Glucose dehydrogenase [FAD, quinone] (625 aa).

An N-terminal signal peptide occupies residues 1 to 42; it reads MSASASACDCLVGVPTGPTLASTCGGSAFMLFMGLLEVFIRS. 66 to 95 lines the FAD pocket; it reads DFIVIGGGSAGSVVASRLSEVPQWKVLLIE. His-544 serves as the catalytic Proton acceptor. A non-standard amino acid (selenocysteine) is located at residue Sec-613.

Belongs to the GMC oxidoreductase family. Requires FAD as cofactor.

It localises to the secreted. The catalysed reaction is a quinone + D-glucose = D-glucono-1,5-lactone + a quinol. Essential for cuticular modification during development. In Drosophila melanogaster (Fruit fly), this protein is Glucose dehydrogenase [FAD, quinone] (Gld).